The primary structure comprises 370 residues: L-selectin (370 aa).

The N-terminal stretch at 1–28 is a signal peptide; sequence MLCPWKCQNAQRGLWNVFKLWVWIMLCC. The propeptide occupies 29-38; that stretch reads DFFAHHGTDC. Topologically, residues 39–333 are extracellular; sequence WTYHYSKRPM…SINEESDYNP (295 aa). The 101-residue stretch at 55 to 155 folds into the C-type lectin domain; that stretch reads AFCRENYTDL…ACHKAKTALC (101 aa). Cystine bridges form between Cys57-Cys155, Cys128-Cys147, Cys128-Cys160, Cys160-Cys171, Cys165-Cys180, Cys182-Cys191, Cys197-Cys241, Cys227-Cys254, Cys259-Cys303, and Cys289-Cys316. Asn60, Asn77, and Asn104 each carry an N-linked (GlcNAc...) asparagine glycan. Ca(2+) is bound by residues Glu118, Asn120, Glu126, Asn143, and Asp144. The 37-residue stretch at 156–192 folds into the EGF-like domain; that stretch reads YTASCKPWSCSGHGQCVEVINNYTCNCDLGYYGPECQ. The N-linked (GlcNAc...) asparagine glycan is linked to Asn177. Sushi domains follow at residues 195–256 and 257–318; these read TQCV…TCRV and IQCE…RCQK. N-linked (GlcNAc...) asparagine glycans are attached at residues Asn216, Asn226, and Asn246. 2 N-linked (GlcNAc...) asparagine glycosylation sites follow: Asn308 and Asn320. Residues 334-354 traverse the membrane as a helical segment; it reads LFIPVAVMVTAFSGLAFIIWL. Residues 355-370 lie on the Cytoplasmic side of the membrane; sequence ARRLKRKSKKVSEKHG.

This sequence belongs to the selectin/LECAM family. Interaction with SELPLG/PSGL1 and PODXL2 is required for promoting recruitment and rolling of leukocytes. This interaction is dependent on the sialyl Lewis X glycan modification of SELPLG and PODXL2, and tyrosine sulfation modifications of SELPLG. Sulfation on 'Tyr-51' of SELPLG is important for L-selectin binding. N-glycosylated. Highly expressed in lymphocytes from peripheral lymph nodes. Low in lymphocytes isolated from Peyer patches.

The protein localises to the cell membrane. In terms of biological role, calcium-dependent lectin that mediates cell adhesion by binding to glycoproteins on neighboring cells. Mediates the adherence of lymphocytes to endothelial cells of high endothelial venules in peripheral lymph nodes. Promotes initial tethering and rolling of leukocytes in endothelia. The protein is L-selectin (SELL) of Bos taurus (Bovine).